A 326-amino-acid chain; its full sequence is G-protein coupled receptor 171 (326 aa).

At 1-19 (MTNSSMFCPIYRDLEPFTY) the chain is on the extracellular side. The chain crosses the membrane as a helical span at residues 20–40 (FFYLVYLIGIIGSCFATWAFI). Over 41–48 (QKSTNHRC) the chain is Cytoplasmic. The helical transmembrane segment at 49–69 (VSIYLINLLTADFLLTLALPV) threads the bilayer. At 70–89 (KIVVDLGVAPWKLRIFHCQV) the chain is on the extracellular side. Cysteines 87 and 165 form a disulfide. The chain crosses the membrane as a helical span at residues 90–110 (TACLIYINMYLSIIFLAFVSI). At 111-133 (DRCLQLVHSCKIYRIQEPGFAKM) the chain is on the cytoplasmic side. A helical membrane pass occupies residues 134–154 (ISAVVWLMVLLIMVPNMVIPI). The Extracellular portion of the chain corresponds to 155–182 (KNIKEKSNVGCMEFKREFGKNWHLLTNF). Residues 183 to 203 (ICVAIFLNFSAIILISNFLVI) traverse the membrane as a helical segment. Over 204 to 221 (RQLYRNRDNANYPSVKSA) the chain is Cytoplasmic. A helical membrane pass occupies residues 222 to 242 (LLNILLVTASYIICFVPYHAV). Residues 243-268 (RIPYTLSQTEVISDCSTRIALFKAKE) are Extracellular-facing. Residues 269–289 (ATLLLAVSNLCFDPILYYHLS) traverse the membrane as a helical segment. Residues 290 to 326 (KAFRLKVTETFASPQKMKAREEKPRRENDVQSTGSAC) lie on the Cytoplasmic side of the membrane. Positions 305–326 (KMKAREEKPRRENDVQSTGSAC) are disordered. Positions 307 to 318 (KAREEKPRREND) are enriched in basic and acidic residues.

This sequence belongs to the G-protein coupled receptor 1 family.

The protein localises to the cell membrane. In terms of biological role, G-protein coupled receptor for Big LEN, a 16-amino acid neuropeptide produced from the precursor protein, proSAAS (encoded by PCSK1N). Acts through a G(i)-alpha-mediated pathway in response to Big LEN. Big LEN-GPR171 system plays an important role in regulating feeding and metabolism. Also plays a role in modulating fear and anxiety-like behaviors in the basolateral amygdala. Big LEN-GPR171 modulates the mu-type opioid receptor signaling and antinociception. Acts as a negative regulator T cell function. This is G-protein coupled receptor 171 from Rattus norvegicus (Rat).